Consider the following 372-residue polypeptide: Anhydro-N-acetylmuramic acid kinase (372 aa).

Position 18–25 (18–25) interacts with ATP; it reads GTSLDGID.

Belongs to the anhydro-N-acetylmuramic acid kinase family.

The catalysed reaction is 1,6-anhydro-N-acetyl-beta-muramate + ATP + H2O = N-acetyl-D-muramate 6-phosphate + ADP + H(+). It functions in the pathway amino-sugar metabolism; 1,6-anhydro-N-acetylmuramate degradation. It participates in cell wall biogenesis; peptidoglycan recycling. Functionally, catalyzes the specific phosphorylation of 1,6-anhydro-N-acetylmuramic acid (anhMurNAc) with the simultaneous cleavage of the 1,6-anhydro ring, generating MurNAc-6-P. Is required for the utilization of anhMurNAc either imported from the medium or derived from its own cell wall murein, and thus plays a role in cell wall recycling. This Thiobacillus denitrificans (strain ATCC 25259 / T1) protein is Anhydro-N-acetylmuramic acid kinase.